The following is a 500-amino-acid chain: Flt3-interacting zinc finger protein 1 (500 aa).

Position 1 is an N-acetylmethionine (Met-1). Positions Met-1 to Ala-24 are disordered. Residues Val-9–Ala-19 show a composition bias toward pro residues. 6 consecutive C2H2-type zinc fingers follow at residues Phe-29–His-51, His-57–His-79, Tyr-85–His-107, Tyr-113–His-136, Phe-204–His-226, and Phe-232–His-254. Disordered stretches follow at residues Asp-255–Val-284 and Lys-306–Glu-328. A compositionally biased stretch (polar residues) spans Leu-256–Trp-267. 5 C2H2-type zinc fingers span residues Tyr-336–His-357, Tyr-363–His-386, Phe-418–His-440, Phe-446–His-468, and Phe-474–His-496. A disordered region spans residues Arg-383 to Lys-415.

Interacts with FLT3 cytoplasmic catalytic domain, following receptor stimulation, in a kinase-independent manner. Does not interact with other structurally related receptor tyrosine kinases, including KIT, CSF1R and PDGFR. Interacts with NRL. Widely expressed. In the retina, highest expression in the ganglion cell layer.

Its subcellular location is the cytoplasm. It localises to the nucleus. May be a transcriptional repressor of NRL function in photoreceptors. Does not repress CRX-mediated transactivation. The protein is Flt3-interacting zinc finger protein 1 (Fiz1) of Mus musculus (Mouse).